Consider the following 280-residue polypeptide: Energy-coupling factor transporter ATP-binding protein EcfA1 (280 aa).

One can recognise an ABC transporter domain in the interval 6–241 (LRTENISFQY…SHMLQEIGLD (236 aa)). Residue 40–47 (GQNGSGKS) participates in ATP binding.

Belongs to the ABC transporter superfamily. Energy-coupling factor EcfA family. As to quaternary structure, forms a stable energy-coupling factor (ECF) transporter complex composed of 2 membrane-embedded substrate-binding proteins (S component), 2 ATP-binding proteins (A component) and 2 transmembrane proteins (T component).

The protein localises to the cell membrane. ATP-binding (A) component of a common energy-coupling factor (ECF) ABC-transporter complex. Unlike classic ABC transporters this ECF transporter provides the energy necessary to transport a number of different substrates. This chain is Energy-coupling factor transporter ATP-binding protein EcfA1, found in Bacillus thuringiensis subsp. konkukian (strain 97-27).